An 889-amino-acid chain; its full sequence is DNA mismatch repair protein MutS (889 aa).

An ATP-binding site is contributed by 622 to 629; that stretch reads GPNMAGKS. Residues 869 to 889 are disordered; the sequence is QRVKRPEKAPADVTAETEDQE.

Belongs to the DNA mismatch repair MutS family.

This protein is involved in the repair of mismatches in DNA. It is possible that it carries out the mismatch recognition step. This protein has a weak ATPase activity. In Desulfatibacillum aliphaticivorans, this protein is DNA mismatch repair protein MutS.